A 465-amino-acid chain; its full sequence is Protein maelstrom (465 aa).

The HMG box DNA-binding region spans 2–69 (APKKHSGFMM…ADRGKRERLN (68 aa)). Residues 415-440 (MRKSSKHTGPSVSTQRERNAGAWNLP) are disordered.

The protein belongs to the maelstrom family.

The protein localises to the cytoplasm. It localises to the nucleus. Functionally, involved both in the piRNA and miRNA metabolic processes. As a component of the meiotic nuage, plays a central role during oogenesis by repressing transposable elements and preventing their mobilization, which is essential for the germline integrity. Repression of transposable elements is mediated via the piRNA metabolic process, which mediates the repression of transposable elements during meiosis by forming complexes composed of piRNAs and Piwi proteins and governs the repression of transposons. As a nuclear component, it is required for proper differentiation in the germline stem cell (GSC) lineage by repressing microRNA-7 (miR-7), thereby acting as an indirect regulator of bag-of-marbles (Bam). Acts by binding to the promoter of miR-7 gene and repressing its expression; miR-7 repression alleviates the Bam repression by miR-7, thereby allowing differentiation in the germline stem cell (GSC) lineage. This Drosophila yakuba (Fruit fly) protein is Protein maelstrom (mael).